We begin with the raw amino-acid sequence, 92 residues long: Small ribosomal subunit protein uS19c (92 aa).

Belongs to the universal ribosomal protein uS19 family.

The protein resides in the plastid. It is found in the chloroplast. In terms of biological role, protein S19 forms a complex with S13 that binds strongly to the 16S ribosomal RNA. This chain is Small ribosomal subunit protein uS19c, found in Psilotum nudum (Whisk fern).